The following is a 154-amino-acid chain: OCIA domain-containing protein 2 (154 aa).

Positions 1-22 are disordered; that stretch reads MASASARGNQDKDAHFPPPSKQ. Positions 1-120 constitute an OCIA domain; sequence MASASARGNQ…HFFEDQLRGA (120 aa). Lys-41 is modified (N6-acetyllysine).

As to quaternary structure, interacts (via OCIA domain) with OCIAD1/ASRIJ and STAT3.

Its subcellular location is the endosome. The protein localises to the mitochondrion. The protein resides in the mitochondrion inner membrane. Functionally, has an essential role in the assembly of mitochondrial respiratory chain complex III. Is also required for STAT3 activation and plays a role in cell migration. The chain is OCIA domain-containing protein 2 (OCIAD2) from Homo sapiens (Human).